The chain runs to 138 residues: Putative membrane protein insertion efficiency factor (138 aa).

A disordered region spans residues 71-138 (YDPVPGTPEA…GTPSHTRGEN (68 aa)). Residues 81–113 (RQWRELHPETARSKNEPIHDLTDDNPRDHEPAL) are compositionally biased toward basic and acidic residues. The segment covering 123–138 (PGSTHTGTPSHTRGEN) has biased composition (polar residues).

Belongs to the UPF0161 family.

It localises to the cell membrane. Its function is as follows. Could be involved in insertion of integral membrane proteins into the membrane. The chain is Putative membrane protein insertion efficiency factor from Cutibacterium acnes (strain DSM 16379 / KPA171202) (Propionibacterium acnes).